A 257-amino-acid chain; its full sequence is Ditrans,polycis-undecaprenyl-diphosphate synthase ((2E,6E)-farnesyl-diphosphate specific) (257 aa).

Residue D23 is part of the active site. Residue D23 participates in Mg(2+) binding. Residues 24–27, W28, R36, H40, and 68–70 each bind substrate; these read GNGR and SSE. N71 (proton acceptor) is an active-site residue. Residues W72, R74, R191, and 197–199 each bind substrate; that span reads RIS. E210 serves as a coordination point for Mg(2+).

This sequence belongs to the UPP synthase family. Homodimer. The cofactor is Mg(2+).

It carries out the reaction 8 isopentenyl diphosphate + (2E,6E)-farnesyl diphosphate = di-trans,octa-cis-undecaprenyl diphosphate + 8 diphosphate. Catalyzes the sequential condensation of isopentenyl diphosphate (IPP) with (2E,6E)-farnesyl diphosphate (E,E-FPP) to yield (2Z,6Z,10Z,14Z,18Z,22Z,26Z,30Z,34E,38E)-undecaprenyl diphosphate (di-trans,octa-cis-UPP). UPP is the precursor of glycosyl carrier lipid in the biosynthesis of bacterial cell wall polysaccharide components such as peptidoglycan and lipopolysaccharide. This Xanthomonas axonopodis pv. citri (strain 306) protein is Ditrans,polycis-undecaprenyl-diphosphate synthase ((2E,6E)-farnesyl-diphosphate specific).